The chain runs to 118 residues: Vesicle-associated membrane protein 1 (118 aa).

Positions 1–15 (MSAPAQPPAEGTEGA) are enriched in low complexity. The segment at 1 to 38 (MSAPAQPPAEGTEGAAPGGGPPGPPPNTTSNRRLQQTQ) is disordered. At 1 to 96 (MSAPAQPPAE…KRKYWWKNCK (96 aa)) the chain is on the cytoplasmic side. Positions 28-38 (TTSNRRLQQTQ) are enriched in polar residues. The region spanning 33–93 (RLQQTQAQVE…AKLKRKYWWK (61 aa)) is the v-SNARE coiled-coil homology domain. S63 is subject to Phosphoserine. A helical; Anchor for type IV membrane protein membrane pass occupies residues 97 to 116 (MMIMLGAICAIIVVVIVIYI). Over 117–118 (FT) the chain is Vesicular.

The protein belongs to the synaptobrevin family. In terms of assembly, interacts with VAPA and VAPB. Post-translationally, (Microbial infection) Targeted and hydrolyzed by C.botulinum neurotoxin type D (BoNT/D, botD) which hydrolyzes the 61-Lys-|-Leu-62 bond and inhibits neurotransmitter release. This is a poor substrate for BoNT/D, high concentrations are required to cleave it in vitro. (Microbial infection) Targeted and hydrolyzed by C.botulinum neurotoxin type F (BoNT/F, botF) which hydrolyzes the 60-Gln-|-Lys-61 bond and inhibits neurotransmitter release. In terms of tissue distribution, expressed in brain and spleen (at protein level). Isoform 1 expressed at very high level in brain. Even higher level found in spinal cord. Isoform 3 expressed in kidney, spleen and liver. Isoforms 2 and 3 expressed in osteoblasts of trabecular bone. Also expressed in heart.

Its subcellular location is the cytoplasmic vesicle. It is found in the secretory vesicle. The protein localises to the synaptic vesicle membrane. It localises to the synapse. The protein resides in the synaptosome. Its subcellular location is the cytoplasmic vesicle membrane. It is found in the mitochondrion outer membrane. Functionally, involved in the targeting and/or fusion of transport vesicles to their target membrane. This is Vesicle-associated membrane protein 1 (Vamp1) from Rattus norvegicus (Rat).